Consider the following 145-residue polypeptide: ATP synthase epsilon chain (145 aa).

Belongs to the ATPase epsilon chain family. As to quaternary structure, F-type ATPases have 2 components, CF(1) - the catalytic core - and CF(0) - the membrane proton channel. CF(1) has five subunits: alpha(3), beta(3), gamma(1), delta(1), epsilon(1). CF(0) has three main subunits: a, b and c.

It is found in the cell inner membrane. Functionally, produces ATP from ADP in the presence of a proton gradient across the membrane. This chain is ATP synthase epsilon chain, found in Francisella tularensis subsp. mediasiatica (strain FSC147).